Here is a 393-residue protein sequence, read N- to C-terminus: Demethylspheroidene O-methyltransferase (393 aa).

The disordered stretch occupies residues 1-36 (MPKDDHTGATADRTAQPTGTGKQPLVPGQPGAAPVQ). Positions 26–36 (VPGQPGAAPVQ) are enriched in low complexity. Positions 259 and 297 each coordinate S-adenosyl-L-methionine.

This sequence belongs to the class I-like SAM-binding methyltransferase superfamily. Cation-independent O-methyltransferase family.

It catalyses the reaction demethylspheroidene + S-adenosyl-L-methionine = spheroidene + S-adenosyl-L-homocysteine + H(+). It participates in carotenoid biosynthesis; spheroidene biosynthesis. In terms of biological role, methyltransferase that mediates the O-methylation of 1-hydroxy carotenoids. Converts hydroxyneurosporene to methoxyneurosporene or demethylspheroidene to spheroidene. Also able to produce spirilloxanthin. The protein is Demethylspheroidene O-methyltransferase (crtF) of Rhodobacter capsulatus (strain ATCC BAA-309 / NBRC 16581 / SB1003).